The sequence spans 549 residues: Glucose-6-phosphate isomerase (549 aa).

Glu355 (proton donor) is an active-site residue. Catalysis depends on residues His386 and Lys514.

This sequence belongs to the GPI family.

It is found in the cytoplasm. The enzyme catalyses alpha-D-glucose 6-phosphate = beta-D-fructose 6-phosphate. It participates in carbohydrate biosynthesis; gluconeogenesis. The protein operates within carbohydrate degradation; glycolysis; D-glyceraldehyde 3-phosphate and glycerone phosphate from D-glucose: step 2/4. Catalyzes the reversible isomerization of glucose-6-phosphate to fructose-6-phosphate. This Buchnera aphidicola subsp. Acyrthosiphon pisum (strain APS) (Acyrthosiphon pisum symbiotic bacterium) protein is Glucose-6-phosphate isomerase.